We begin with the raw amino-acid sequence, 591 residues long: Homeobox domain-containing transcription factor HOB1 (591 aa).

A compositionally biased stretch (basic and acidic residues) spans 1–15 (MEGKNEDMHTPRGPE). 2 disordered regions span residues 1–37 (MEGK…DMLG) and 148–168 (IAGP…RSPA). Positions 176–223 (IAILRESYARNPNPDRKELERLAARTGRPWNKIREYFRQRRNKLRGLE) form a DNA-binding region, homeobox. Disordered stretches follow at residues 420–463 (DAGL…PRES) and 543–563 (DAIE…ALTE). Positions 427 to 441 (QGEEDQPPTVEESDQ) are enriched in acidic residues. A compositionally biased stretch (basic and acidic residues) spans 543–560 (DAIERRNAGESKRKRDDA).

It is found in the nucleus. Its function is as follows. General stress-responsive transcription factor that governs multiple stress responses and adaptations. Plays a key role in virulence. Mediates the expression of LAC1, which is the major laccase involved in melanin synthesis. Positively regulates BZP4 induction under conditions of nutrient starvation and basal expression levels of MBS1 and USV101, 3 major transcription factors that independently contribute to melanin production. Also acts as a key regulator of ergosterol gene expression. The polypeptide is Homeobox domain-containing transcription factor HOB1 (Cryptococcus neoformans var. grubii serotype A (strain H99 / ATCC 208821 / CBS 10515 / FGSC 9487) (Filobasidiella neoformans var. grubii)).